We begin with the raw amino-acid sequence, 409 residues long: Endoglucanase B (409 aa).

The signal sequence occupies residues methionine 1–alanine 21. The segment at cysteine 23–methionine 66 is disordered. Residues lysine 27–serine 38 show a composition bias toward basic and acidic residues. Residues valine 57–methionine 66 are compositionally biased toward polar residues. Catalysis depends on glutamate 212, which acts as the Proton donor. Catalysis depends on glutamate 332, which acts as the Nucleophile.

This sequence belongs to the glycosyl hydrolase 5 (cellulase A) family.

It catalyses the reaction Endohydrolysis of (1-&gt;4)-beta-D-glucosidic linkages in cellulose, lichenin and cereal beta-D-glucans.. This chain is Endoglucanase B (celB), found in Ruminococcus albus.